Reading from the N-terminus, the 242-residue chain is Small ribosomal subunit protein uS3 (242 aa).

Positions isoleucine 39–glutamate 110 constitute a KH type-2 domain. The interval threonine 217–glycine 242 is disordered. The span at glutamine 233–glycine 242 shows a compositional bias: basic and acidic residues.

The protein belongs to the universal ribosomal protein uS3 family. In terms of assembly, part of the 30S ribosomal subunit. Forms a tight complex with proteins S10 and S14.

Its function is as follows. Binds the lower part of the 30S subunit head. Binds mRNA in the 70S ribosome, positioning it for translation. In Prochlorococcus marinus (strain MIT 9313), this protein is Small ribosomal subunit protein uS3.